The chain runs to 569 residues: 2-succinyl-5-enolpyruvyl-6-hydroxy-3-cyclohexene-1-carboxylate synthase (569 aa).

Belongs to the TPP enzyme family. MenD subfamily. In terms of assembly, homodimer. It depends on Mg(2+) as a cofactor. Requires Mn(2+) as cofactor. The cofactor is thiamine diphosphate.

It carries out the reaction isochorismate + 2-oxoglutarate + H(+) = 5-enolpyruvoyl-6-hydroxy-2-succinyl-cyclohex-3-ene-1-carboxylate + CO2. The protein operates within quinol/quinone metabolism; 1,4-dihydroxy-2-naphthoate biosynthesis; 1,4-dihydroxy-2-naphthoate from chorismate: step 2/7. It participates in quinol/quinone metabolism; menaquinone biosynthesis. In terms of biological role, catalyzes the thiamine diphosphate-dependent decarboxylation of 2-oxoglutarate and the subsequent addition of the resulting succinic semialdehyde-thiamine pyrophosphate anion to isochorismate to yield 2-succinyl-5-enolpyruvyl-6-hydroxy-3-cyclohexene-1-carboxylate (SEPHCHC). The chain is 2-succinyl-5-enolpyruvyl-6-hydroxy-3-cyclohexene-1-carboxylate synthase from Shewanella halifaxensis (strain HAW-EB4).